A 469-amino-acid chain; its full sequence is Neuraminidase (469 aa).

Residues 1–6 (MNPNQK) are Intravirion-facing. Residues 7–29 (IITIGSVSLTIATVCFLMQIAIL) form a helical membrane-spanning segment. Residues 11-33 (GSVSLTIATVCFLMQIAILATTV) form an involved in apical transport and lipid raft association region. Topologically, residues 30–469 (ATTVTLHFKQ…DGANINFMPI (440 aa)) are virion surface. Positions 36 to 88 (HFKQNECNPPANNQVVPCEPIIIERNITEIVYLNNITIEKEVCPEVAEYRNWS) are hypervariable stalk region. Asparagine 61, asparagine 70, and asparagine 86 each carry an N-linked (GlcNAc...) asparagine; by host glycan. Residues 91–469 (QCQITGFAPF…DGANINFMPI (379 aa)) are head of neuraminidase. Disulfide bonds link cysteine 92/cysteine 417, cysteine 124/cysteine 129, cysteine 183/cysteine 230, cysteine 232/cysteine 237, cysteine 278/cysteine 291, cysteine 280/cysteine 289, cysteine 318/cysteine 337, and cysteine 421/cysteine 447. Substrate is bound at residue arginine 118. An N-linked (GlcNAc...) asparagine; by host glycan is attached at asparagine 146. Aspartate 151 serves as the catalytic Proton donor/acceptor. Arginine 152 is a binding site for substrate. Asparagine 200 and asparagine 234 each carry an N-linked (GlcNAc...) asparagine; by host glycan. Residue 276 to 277 (EE) participates in substrate binding. Arginine 292 is a binding site for substrate. Ca(2+)-binding residues include aspartate 293, glycine 297, and aspartate 324. The tract at residues 324-349 (DTPRSDDSSSNSNCRDPNNERGNPGV) is disordered. Arginine 371 contributes to the substrate binding site. A glycan (N-linked (GlcNAc...) asparagine; by host) is linked at asparagine 402. Residue tyrosine 406 is the Nucleophile of the active site.

Belongs to the glycosyl hydrolase 34 family. Homotetramer. The cofactor is Ca(2+). N-glycosylated.

It localises to the virion membrane. The protein resides in the host apical cell membrane. The catalysed reaction is Hydrolysis of alpha-(2-&gt;3)-, alpha-(2-&gt;6)-, alpha-(2-&gt;8)- glycosidic linkages of terminal sialic acid residues in oligosaccharides, glycoproteins, glycolipids, colominic acid and synthetic substrates.. Its activity is regulated as follows. Inhibited by the neuraminidase inhibitors zanamivir (Relenza) and oseltamivir (Tamiflu). These drugs interfere with the release of progeny virus from infected cells and are effective against all influenza strains. Resistance to neuraminidase inhibitors is quite rare. Catalyzes the removal of terminal sialic acid residues from viral and cellular glycoconjugates. Cleaves off the terminal sialic acids on the glycosylated HA during virus budding to facilitate virus release. Additionally helps virus spread through the circulation by further removing sialic acids from the cell surface. These cleavages prevent self-aggregation and ensure the efficient spread of the progeny virus from cell to cell. Otherwise, infection would be limited to one round of replication. Described as a receptor-destroying enzyme because it cleaves a terminal sialic acid from the cellular receptors. May facilitate viral invasion of the upper airways by cleaving the sialic acid moieties on the mucin of the airway epithelial cells. Likely to plays a role in the budding process through its association with lipid rafts during intracellular transport. May additionally display a raft-association independent effect on budding. Plays a role in the determination of host range restriction on replication and virulence. Sialidase activity in late endosome/lysosome traffic seems to enhance virus replication. The polypeptide is Neuraminidase (Influenza A virus (strain A/Turkey/Wisconsin/1/1966 H9N2)).